The primary structure comprises 293 residues: tRNA pseudouridine synthase B (293 aa).

The active-site Nucleophile is the aspartate 38.

This sequence belongs to the pseudouridine synthase TruB family. Type 1 subfamily.

The enzyme catalyses uridine(55) in tRNA = pseudouridine(55) in tRNA. In terms of biological role, responsible for synthesis of pseudouridine from uracil-55 in the psi GC loop of transfer RNAs. In Nostoc sp. (strain PCC 7120 / SAG 25.82 / UTEX 2576), this protein is tRNA pseudouridine synthase B.